Here is a 336-residue protein sequence, read N- to C-terminus: Homoserine O-acetyltransferase (336 aa).

Residues 58–321 form the AB hydrolase-1 domain; sequence AILVLHALTG…PHGHDAFLID (264 aa). S147 functions as the Nucleophile in the catalytic mechanism. R204 contributes to the substrate binding site. Residues D286 and H315 contribute to the active site. D316 contacts substrate.

It belongs to the AB hydrolase superfamily. MetX family. Homodimer.

It is found in the cytoplasm. It catalyses the reaction L-homoserine + acetyl-CoA = O-acetyl-L-homoserine + CoA. Its pathway is amino-acid biosynthesis; L-methionine biosynthesis via de novo pathway; O-acetyl-L-homoserine from L-homoserine: step 1/1. Functionally, transfers an acetyl group from acetyl-CoA to L-homoserine, forming acetyl-L-homoserine. In Deinococcus geothermalis (strain DSM 11300 / CIP 105573 / AG-3a), this protein is Homoserine O-acetyltransferase.